Reading from the N-terminus, the 243-residue chain is uncharacterized protein (243 aa).

This is an uncharacterized protein from Ureaplasma parvum serovar 3 (strain ATCC 700970).